The following is a 99-amino-acid chain: Protein Tat (99 aa).

The segment at Met-1–Cys-22 is disordered. Residues Met-1–Lys-24 form an interaction with human CREBBP region. The tract at residues Met-1–Gly-48 is transactivation. Positions 22, 25, and 27 each coordinate Zn(2+). A cysteine-rich region spans residues Cys-22–Cys-37. At Lys-28 the chain carries N6-acetyllysine; by host PCAF. Zn(2+) contacts are provided by Cys-30, His-33, Cys-34, and Cys-37. The tract at residues Phe-38–Gly-48 is core. Positions Gly-48 to Pro-99 are disordered. Positions Arg-49–Gly-57 match the Nuclear localization signal, RNA-binding (TAR), and protein transduction motif. The segment at Arg-49–Glu-86 is interaction with the host capping enzyme RNGTT. Lys-50 and Lys-51 each carry N6-acetyllysine; by host EP300 and GCN5L2. An asymmetric dimethylarginine; by host PRMT6 mark is found at Arg-52 and Arg-53. Lys-71 participates in a covalent cross-link: Glycyl lysine isopeptide (Lys-Gly) (interchain with G-Cter in ubiquitin). The Cell attachment site motif lies at Arg-78 to Asp-80. A compositionally biased stretch (basic and acidic residues) spans Gly-83–Ser-93.

It belongs to the lentiviruses Tat family. Interacts with host CCNT1. Associates with the P-TEFb complex composed at least of Tat, P-TEFb (CDK9 and CCNT1), TAR RNA, RNA Pol II. Recruits the HATs CREBBP, TAF1/TFIID, EP300, PCAF and GCN5L2. Interacts with host KAT5/Tip60; this interaction targets the latter to degradation. Interacts with the host deacetylase SIRT1. Interacts with host capping enzyme RNGTT; this interaction stimulates RNGTT. Binds to host KDR, and to the host integrins ITGAV/ITGB3 and ITGA5/ITGB1. Interacts with host KPNB1/importin beta-1 without previous binding to KPNA1/importin alpha-1. Interacts with EIF2AK2. Interacts with host nucleosome assembly protein NAP1L1; this interaction may be required for the transport of Tat within the nucleus, since the two proteins interact at the nuclear rim. Interacts with host C1QBP/SF2P32; this interaction involves lysine-acetylated Tat. Interacts with the host chemokine receptors CCR2, CCR3 and CXCR4. Interacts with host DPP4/CD26; this interaction may trigger an anti-proliferative effect. Interacts with host LDLR. Interacts with the host extracellular matrix metalloproteinase MMP1. Interacts with host PRMT6; this interaction mediates Tat's methylation. Interacts with, and is ubiquitinated by MDM2/Hdm2. Interacts with host PSMC3 and HTATIP2. Interacts with STAB1; this interaction may overcome SATB1-mediated repression of IL2 and IL2RA (interleukin) in T cells by binding to the same domain than HDAC1. Interacts (when acetylated) with human CDK13, thereby increasing HIV-1 mRNA splicing and promoting the production of the doubly spliced HIV-1 protein Nef. Interacts with host TBP; this interaction modulates the activity of transcriptional pre-initiation complex. Interacts with host RELA. Interacts with host PLSCR1; this interaction negatively regulates Tat transactivation activity by altering its subcellular distribution. Post-translationally, asymmetrical arginine methylation by host PRMT6 seems to diminish the transactivation capacity of Tat and affects the interaction with host CCNT1. In terms of processing, acetylation by EP300, CREBBP, GCN5L2/GCN5 and PCAF regulates the transactivation activity of Tat. EP300-mediated acetylation of Lys-50 promotes dissociation of Tat from the TAR RNA through the competitive binding to PCAF's bromodomain. In addition, the non-acetylated Tat's N-terminus can also interact with PCAF. PCAF-mediated acetylation of Lys-28 enhances Tat's binding to CCNT1. Lys-50 is deacetylated by SIRT1. Polyubiquitination by host MDM2 does not target Tat to degradation, but activates its transactivation function and fosters interaction with CCNT1 and TAR RNA. Post-translationally, phosphorylated by EIF2AK2 on serine and threonine residues adjacent to the basic region important for TAR RNA binding and function. Phosphorylation of Tat by EIF2AK2 is dependent on the prior activation of EIF2AK2 by dsRNA.

The protein localises to the host nucleus. Its subcellular location is the host nucleolus. It localises to the host cytoplasm. The protein resides in the secreted. Functionally, transcriptional activator that increases RNA Pol II processivity, thereby increasing the level of full-length viral transcripts. Recognizes a hairpin structure at the 5'-LTR of the nascent viral mRNAs referred to as the transactivation responsive RNA element (TAR) and recruits the cyclin T1-CDK9 complex (P-TEFb complex) that will in turn hyperphosphorylate the RNA polymerase II to allow efficient elongation. The CDK9 component of P-TEFb and other Tat-activated kinases hyperphosphorylate the C-terminus of RNA Pol II that becomes stabilized and much more processive. Other factors such as HTATSF1/Tat-SF1, SUPT5H/SPT5, and HTATIP2 are also important for Tat's function. Besides its effect on RNA Pol II processivity, Tat induces chromatin remodeling of proviral genes by recruiting the histone acetyltransferases (HATs) CREBBP, EP300 and PCAF to the chromatin. This also contributes to the increase in proviral transcription rate, especially when the provirus integrates in transcriptionally silent region of the host genome. To ensure maximal activation of the LTR, Tat mediates nuclear translocation of NF-kappa-B by interacting with host RELA. Through its interaction with host TBP, Tat may also modulate transcription initiation. Tat can reactivate a latently infected cell by penetrating in it and transactivating its LTR promoter. In the cytoplasm, Tat is thought to act as a translational activator of HIV-1 mRNAs. Extracellular circulating Tat can be endocytosed by surrounding uninfected cells via the binding to several surface receptors such as CD26, CXCR4, heparan sulfate proteoglycans (HSPG) or LDLR. Neurons are rarely infected, but they internalize Tat via their LDLR. Through its interaction with nuclear HATs, Tat is potentially able to control the acetylation-dependent cellular gene expression. Modulates the expression of many cellular genes involved in cell survival, proliferation or in coding for cytokines or cytokine receptors. Tat plays a role in T-cell and neurons apoptosis. Tat induced neurotoxicity and apoptosis probably contribute to neuroAIDS. Circulating Tat also acts as a chemokine-like and/or growth factor-like molecule that binds to specific receptors on the surface of the cells, affecting many cellular pathways. In the vascular system, Tat binds to ITGAV/ITGB3 and ITGA5/ITGB1 integrins dimers at the surface of endothelial cells and competes with bFGF for heparin-binding sites, leading to an excess of soluble bFGF. The protein is Protein Tat of Homo sapiens (Human).